We begin with the raw amino-acid sequence, 66 residues long: MAKGKDIRIIVILECTGCDQKSVNKESSGISRYITQKNRHNTPSRLELIKFCPCCRKHMIHAEIKK.

It belongs to the bacterial ribosomal protein bL33 family.

It localises to the plastid. Its subcellular location is the chloroplast. The sequence is that of Large ribosomal subunit protein bL33c from Lotus japonicus (Lotus corniculatus var. japonicus).